Consider the following 290-residue polypeptide: MLTGSITAIVTPFKNGEVDYGAFERLIEFQIQNGTDGILVCGTSGESPTLSYEEHEAVIEFAVKSAKKRIHIMAGTGANSTEEALRFTTFAKAVGADSALLVVPYYNKPTQEGLYRHFSKIAKEVDIDIYIYNIPSRTGIEISVDTLERLAKDHKNIKGSKESTPNMDRISEILKRIPNFTVFSGDDSLTLPMMSLGAKGVVSVISNVMPKEIKEFTSYALKGDFEKARDMHYYLLEIFKIMFIETNPIPVKTALSLMGMVKKEFRLPLCEMLPQNEEKLKEVLKKYNLI.

Ser44 contributes to the pyruvate binding site. Tyr132 functions as the Proton donor/acceptor in the catalytic mechanism. The Schiff-base intermediate with substrate role is filled by Lys161. Val202 contributes to the pyruvate binding site.

Belongs to the DapA family. Homotetramer; dimer of dimers.

The protein resides in the cytoplasm. The catalysed reaction is L-aspartate 4-semialdehyde + pyruvate = (2S,4S)-4-hydroxy-2,3,4,5-tetrahydrodipicolinate + H2O + H(+). Its pathway is amino-acid biosynthesis; L-lysine biosynthesis via DAP pathway; (S)-tetrahydrodipicolinate from L-aspartate: step 3/4. Its function is as follows. Catalyzes the condensation of (S)-aspartate-beta-semialdehyde [(S)-ASA] and pyruvate to 4-hydroxy-tetrahydrodipicolinate (HTPA). The sequence is that of 4-hydroxy-tetrahydrodipicolinate synthase from Hydrogenobaculum sp. (strain Y04AAS1).